Consider the following 353-residue polypeptide: UDP-galactose transporter (353 aa).

A run of 6 helical transmembrane segments spans residues 147-167 (LGPM…IVQL), 184-204 (VTGF…GVYF), 215-235 (LWVR…FTIL), 254-274 (IVWL…LCVA), 279-299 (IMKN…SVYL), and 302-322 (FKIS…TFLY). The tract at residues 325 to 353 (PESKPSPSRGTYIPMTTQDAAAKDVDHKH) is disordered. Residues 329–343 (PSPSRGTYIPMTTQD) show a composition bias toward polar residues.

This sequence belongs to the nucleotide-sugar transporter family. SLC35A subfamily.

The protein resides in the golgi apparatus membrane. Functionally, essential for the transport of UDP-galactose into the lumen of Golgi apparatus. The protein is UDP-galactose transporter (gms1) of Schizosaccharomyces pombe (strain 972 / ATCC 24843) (Fission yeast).